The chain runs to 601 residues: Potassium-transporting ATPase potassium-binding subunit (601 aa).

The next 12 membrane-spanning stretches (helical) occupy residues 6-26 (IMLL…LGLF), 65-85 (SYAI…YAVQ), 136-156 (ALTG…FALI), 179-199 (LYIL…QGVI), 283-303 (FSNF…CFTF), 313-333 (GWAV…IVMT), 367-387 (FGIS…CGAV), 397-417 (MGGF…GGVG), 419-439 (GLYG…LMIG), 458-478 (SIAI…AVLV), 524-544 (MLAI…LAIA), and 566-586 (LFVA…YVPA).

Belongs to the KdpA family. In terms of assembly, the system is composed of three essential subunits: KdpA, KdpB and KdpC.

It is found in the cell inner membrane. Functionally, part of the high-affinity ATP-driven potassium transport (or Kdp) system, which catalyzes the hydrolysis of ATP coupled with the electrogenic transport of potassium into the cytoplasm. This subunit binds the periplasmic potassium ions and delivers the ions to the membrane domain of KdpB through an intramembrane tunnel. The polypeptide is Potassium-transporting ATPase potassium-binding subunit (Herminiimonas arsenicoxydans).